Reading from the N-terminus, the 163-residue chain is uncharacterized protein (163 aa).

The segment at D23–Q113 is disordered. Residue S102 is modified to Phosphoserine.

This is an uncharacterized protein from Mus musculus (Mouse).